The following is an 839-amino-acid chain: Homeobox-leucine zipper protein HOX10 (839 aa).

Disordered regions lie at residues 1-24 (MAAA…SGMD) and 132-157 (QNTP…RDAS). Residues 24 to 87 (DSGKYVRYTP…NRRCRDKQRK (64 aa)) constitute a DNA-binding region (homeobox). Residues 91 to 134 (RLQAVNRKLTAMNKLLMEENERLQKQVSQLVHENAHMRQQLQNT) are a coiled coil. Positions 155 to 383 (DASNPSGLLS…IAQETSGEVV (229 aa)) constitute an START domain.

This sequence belongs to the HD-ZIP homeobox family. Class III subfamily. As to expression, expressed in stems, leaf sheaths and blades and panicles.

The protein localises to the nucleus. Its function is as follows. Probable transcription factor. The sequence is that of Homeobox-leucine zipper protein HOX10 (HOX10) from Oryza sativa subsp. indica (Rice).